Reading from the N-terminus, the 197-residue chain is Phosphoheptose isomerase (197 aa).

The SIS domain maps to 34-196 (MVQCLLGGNK…DRTLFPQDDQ (163 aa)). Residue 49-51 (NGG) participates in substrate binding. The Zn(2+) site is built by His-58 and Glu-62. Residues Glu-62, 91–92 (ND), 117–119 (STS), Ser-122, and Gln-172 each bind substrate. The Zn(2+) site is built by Gln-172 and His-180.

The protein belongs to the SIS family. GmhA subfamily. As to quaternary structure, homotetramer. Zn(2+) serves as cofactor.

It is found in the cytoplasm. The catalysed reaction is 2 D-sedoheptulose 7-phosphate = D-glycero-alpha-D-manno-heptose 7-phosphate + D-glycero-beta-D-manno-heptose 7-phosphate. It functions in the pathway carbohydrate biosynthesis; D-glycero-D-manno-heptose 7-phosphate biosynthesis; D-glycero-alpha-D-manno-heptose 7-phosphate and D-glycero-beta-D-manno-heptose 7-phosphate from sedoheptulose 7-phosphate: step 1/1. Catalyzes the isomerization of sedoheptulose 7-phosphate in D-glycero-D-manno-heptose 7-phosphate. The protein is Phosphoheptose isomerase of Shewanella loihica (strain ATCC BAA-1088 / PV-4).